A 182-amino-acid chain; its full sequence is Envelope glycoprotein L (182 aa).

The first 39 residues, 1-39 (MRRSAARGRAVSSTQTAMGAGAAIAVWAAALIALYSSCA), serve as a signal peptide directing secretion. The region spanning 52 to 182 (ANASDTIGRL…RPEKTAPGGV (131 aa)) is the gL alphaherpesvirus-type domain. A disulfide bridge connects residues Cys-73 and Cys-109.

This sequence belongs to the herpesviridae glycoprotein L (gL) family. Alphaherpesvirinae gL subfamily. As to quaternary structure, interacts with glycoprotein H (gH); this interaction is necessary for the correct processing and cell surface expression of gH. The heterodimer gH/gL seems to interact with gB trimers during fusion. O-glycosylated, and sialylated.

It localises to the virion membrane. The protein resides in the host cell membrane. The protein localises to the host Golgi apparatus. It is found in the host trans-Golgi network. Its function is as follows. The heterodimer glycoprotein H-glycoprotein L is required for the fusion of viral and plasma membranes leading to virus entry into the host cell. Acts as a functional inhibitor of gH and maintains gH in an inhibited form. Upon binding to host integrins, gL dissociates from gH leading to activation of the viral fusion glycoproteins gB and gH. This is Envelope glycoprotein L from Amazona oratrix (yellow-headed parrot).